A 495-amino-acid polypeptide reads, in one-letter code: Serine/threonine-protein phosphatase 2A regulatory subunit sur-6 (495 aa).

The tract at residues 1-27 (MVMEVDEPAVAATTSQNQPQEHANDFD) is disordered. Residues 12-21 (ATTSQNQPQE) show a composition bias toward polar residues. 6 WD repeats span residues 64-103 (TEADVISCVEFSHDGEYLATGDKGGRVVIFQRDQSGKYVK), 130-171 (EIDE…RKIG), 215-253 (AHTYHVNSISVNSDQETFLSADDLRVNLWNLEITNESFN), 264-304 (ELTE…LCDA), 323-361 (EIIASVSDVKFSHNGRYLLTRDYLTVKVWDLNMESQPVE), and 378-419 (ENDS…DAKT). Residues 439–459 (SAKRKRNNLSSSGETTEEDLS) form a disordered region. The stretch at 464 to 495 (QFDRKILHTAWHPKDNIIALAATNNLYIFSDV) is one WD 7 repeat.

It belongs to the phosphatase 2A regulatory subunit B family. In terms of assembly, part of a complex consisting of a common heterodimeric core enzyme, composed of catalytic subunit let-92 and constant regulatory subunit paa-1, that associates with a variety of regulatory subunits which confer distinct properties to the holoenzyme. Interacts with let-92.

It is found in the cytoplasm. Functionally, probable regulatory subunit of serine/threonine phosphatase let-92. Together with let-92 and constant regulatory subunit paa-1, positively regulates centriole duplication during early embryonic cell divisions by preventing the degradation of sas-5 and kinase zyg-1. In addition, during vulva development, may play a role with phosphatase let-92 and regulatory subunit paa-1 in the induction of vulva cell precursors by positively regulating let-60/Ras-MAP kinase signaling, probably by promoting lin-45 activation. In intestinal epithelial cells, may play a role in the late secretory pathway probably by regulating the exocyst, a protein complex involved in targeting secretory vesicles to the plasma membrane. In Caenorhabditis elegans, this protein is Serine/threonine-protein phosphatase 2A regulatory subunit sur-6.